The following is a 206-amino-acid chain: 3-demethoxyubiquinol 3-hydroxylase (206 aa).

Fe cation is bound by residues glutamate 55, glutamate 85, histidine 88, glutamate 137, glutamate 169, and histidine 172.

The protein belongs to the COQ7 family. It depends on Fe cation as a cofactor.

The protein localises to the cell membrane. It carries out the reaction a 5-methoxy-2-methyl-3-(all-trans-polyprenyl)benzene-1,4-diol + AH2 + O2 = a 3-demethylubiquinol + A + H2O. It participates in cofactor biosynthesis; ubiquinone biosynthesis. In terms of biological role, catalyzes the hydroxylation of 2-nonaprenyl-3-methyl-6-methoxy-1,4-benzoquinol during ubiquinone biosynthesis. This is 3-demethoxyubiquinol 3-hydroxylase from Laribacter hongkongensis (strain HLHK9).